The sequence spans 330 residues: Ketol-acid reductoisomerase (NADP(+)) (330 aa).

Residues 1 to 181 (MKVFYDSDFK…GLSRAGVIQT (181 aa)) enclose the KARI N-terminal Rossmann domain. NADP(+) contacts are provided by residues 24 to 27 (YGSQ), Arg-47, Ser-52, and 82 to 85 (DELQ). Residue His-107 is part of the active site. Gly-133 contributes to the NADP(+) binding site. One can recognise a KARI C-terminal knotted domain in the interval 182–327 (TFKEETETDL…AKLRKMCGLE (146 aa)). Mg(2+) is bound by residues Asp-190, Glu-194, Glu-226, and Glu-230. Ser-251 contacts substrate.

Belongs to the ketol-acid reductoisomerase family. The cofactor is Mg(2+).

The catalysed reaction is (2R)-2,3-dihydroxy-3-methylbutanoate + NADP(+) = (2S)-2-acetolactate + NADPH + H(+). It carries out the reaction (2R,3R)-2,3-dihydroxy-3-methylpentanoate + NADP(+) = (S)-2-ethyl-2-hydroxy-3-oxobutanoate + NADPH + H(+). It functions in the pathway amino-acid biosynthesis; L-isoleucine biosynthesis; L-isoleucine from 2-oxobutanoate: step 2/4. The protein operates within amino-acid biosynthesis; L-valine biosynthesis; L-valine from pyruvate: step 2/4. Involved in the biosynthesis of branched-chain amino acids (BCAA). Catalyzes an alkyl-migration followed by a ketol-acid reduction of (S)-2-acetolactate (S2AL) to yield (R)-2,3-dihydroxy-isovalerate. In the isomerase reaction, S2AL is rearranged via a Mg-dependent methyl migration to produce 3-hydroxy-3-methyl-2-ketobutyrate (HMKB). In the reductase reaction, this 2-ketoacid undergoes a metal-dependent reduction by NADPH to yield (R)-2,3-dihydroxy-isovalerate. This Methanococcus maripaludis (strain C6 / ATCC BAA-1332) protein is Ketol-acid reductoisomerase (NADP(+)).